The chain runs to 132 residues: Small ribosomal subunit protein uS8 (132 aa).

It belongs to the universal ribosomal protein uS8 family. Part of the 30S ribosomal subunit. Contacts proteins S5 and S12.

One of the primary rRNA binding proteins, it binds directly to 16S rRNA central domain where it helps coordinate assembly of the platform of the 30S subunit. This Streptococcus uberis (strain ATCC BAA-854 / 0140J) protein is Small ribosomal subunit protein uS8.